The following is a 224-amino-acid chain: Peroxiredoxin-like 2A (224 aa).

Positions 14-112 (MWSVGLGAVG…SKLGVPLYAV (99 aa)) are thioredoxin fold. Sec85 is a non-standard amino acid (selenocysteine). The Redox-active role is filled by Cys88.

The protein belongs to the peroxiredoxin-like PRXL2 family. PRXL2A subfamily.

It localises to the cytoplasm. In terms of biological role, involved in redox regulation of the cell. Acts as an antioxidant. Inhibits TNFSF11-induced NFKB1 and JUN activation and osteoclast differentiation. May affect bone resorption and help to maintain bone mass. The chain is Peroxiredoxin-like 2A (PRXL2A) from Gallus gallus (Chicken).